We begin with the raw amino-acid sequence, 403 residues long: CinA-like protein (403 aa).

This sequence belongs to the CinA family.

This is CinA-like protein from Petrotoga mobilis (strain DSM 10674 / SJ95).